The sequence spans 68 residues: 1-carboxybiuret hydrolase subunit AtzG (68 aa).

In terms of assembly, heterotetramer consisting of 2 AtzE and 2 AtzG subunits.

The protein operates within xenobiotic degradation; atrazine degradation. Its function is as follows. Important for the activity of the AtzE subunit of 1-carboxybiuret hydrolase. The chain is 1-carboxybiuret hydrolase subunit AtzG from Pseudomonas sp. (strain ADP).